We begin with the raw amino-acid sequence, 447 residues long: MKPVIALVGRPNVGKSTLFNRLTRSRDALVADLPGLTRDRHYGEGRMGERPFLVIDTGGFEPVAKEGIMHEMAKQTKQAVAEADVVIFIVDGRQGLTPHDKTITDFLRKSGRSVMLVVNKAEGMKYTMVTADFYELGLGDPYVISAAHGDGVSDLVEESLDIAFAQRPPEEEVPESKDRSIRLAIVGRPNVGKSTLVNTLLGEERVIAFDLPGTTRDSIEIPFEREGKLYTLIDTAGIRRRGKVFEAIEKFSVVKTLQSISEANVVLLLLDAQQDISEQDAHIAGFILESGRALVVGVNKWDGLTSDRRDEIKIDLERKLGFLSFAKTHFVSALKSSGIGPMMKSVDNAYAAAMSNLSTPKLTRALIEAVEHQQPRRKGSIRPKLRYAHQGGMNPPIVVIHGNALDAIDANYKRFLEKHFRETFSLVGTPLRIELRSGKNPFSRSEK.

EngA-type G domains are found at residues P3–R167 and I181–M354. GTP contacts are provided by residues G9–S16, D56–F60, N119–E122, G187–S194, D234–I238, and N299–D302. Residues S355–K439 enclose the KH-like domain.

The protein belongs to the TRAFAC class TrmE-Era-EngA-EngB-Septin-like GTPase superfamily. EngA (Der) GTPase family. In terms of assembly, associates with the 50S ribosomal subunit.

Functionally, GTPase that plays an essential role in the late steps of ribosome biogenesis. This is GTPase Der from Herminiimonas arsenicoxydans.